Consider the following 128-residue polypeptide: MLEAGIDIIEISRLERSIKRHPRLLARVFTPAEVAYCLARHRPGASLAARFAAKEAVMKALGIGLGRCSWQDIEITREQGGRPRVILHNRARQLARELGVGEITVSLSHCHAYAAAVALVESSFSEEG.

D7 and E55 together coordinate Mg(2+).

Belongs to the P-Pant transferase superfamily. AcpS family. Requires Mg(2+) as cofactor.

Its subcellular location is the cytoplasm. The enzyme catalyses apo-[ACP] + CoA = holo-[ACP] + adenosine 3',5'-bisphosphate + H(+). In terms of biological role, transfers the 4'-phosphopantetheine moiety from coenzyme A to a Ser of acyl-carrier-protein. This Moorella thermoacetica (strain ATCC 39073 / JCM 9320) protein is Holo-[acyl-carrier-protein] synthase.